The chain runs to 125 residues: Large ribosomal subunit protein bL20 (125 aa).

The protein belongs to the bacterial ribosomal protein bL20 family.

In terms of biological role, binds directly to 23S ribosomal RNA and is necessary for the in vitro assembly process of the 50S ribosomal subunit. It is not involved in the protein synthesizing functions of that subunit. This is Large ribosomal subunit protein bL20 from Methylobacterium nodulans (strain LMG 21967 / CNCM I-2342 / ORS 2060).